A 530-amino-acid polypeptide reads, in one-letter code: Glutamyl-tRNA reductase 2, chloroplastic (530 aa).

Residues 1-64 (MAVSSAFVVT…RCEISPSNKA (64 aa)) constitute a chloroplast transit peptide. Substrate-binding positions include 134–137 (TCNR), serine 194, 199–201 (EGQ), and glutamine 205. Cysteine 135 (nucleophile) is an active-site residue. 277-282 (GAGKMG) contributes to the NADP(+) binding site.

The protein belongs to the glutamyl-tRNA reductase family. As to expression, expressed in roots and flowers. Detected in leaves, hypocotyls and cotyledons.

The protein resides in the plastid. Its subcellular location is the chloroplast. It carries out the reaction (S)-4-amino-5-oxopentanoate + tRNA(Glu) + NADP(+) = L-glutamyl-tRNA(Glu) + NADPH + H(+). Its pathway is porphyrin-containing compound metabolism; protoporphyrin-IX biosynthesis; 5-aminolevulinate from L-glutamyl-tRNA(Glu): step 1/2. It participates in porphyrin-containing compound metabolism; chlorophyll biosynthesis. Its function is as follows. Catalyzes the NADPH-dependent reduction of glutamyl-tRNA(Glu) to glutamate 1-semialdehyde (GSA). Probably involved in wound-induced supply of heme to defensive hemoproteins outside plastids. The protein is Glutamyl-tRNA reductase 2, chloroplastic (HEMA2) of Arabidopsis thaliana (Mouse-ear cress).